Consider the following 112-residue polypeptide: Transmembrane protein 14C (112 aa).

The next 4 helical transmembrane spans lie at Val7–Ile27, Ala32–Ala52, Val62–His82, and Pro88–Phe108.

This sequence belongs to the TMEM14 family.

It is found in the mitochondrion membrane. In terms of biological role, required for normal heme biosynthesis. This Homo sapiens (Human) protein is Transmembrane protein 14C (TMEM14C).